The primary structure comprises 407 residues: Argininosuccinate synthase (407 aa).

ATP contacts are provided by residues 11 to 19 and alanine 38; that span reads AYSGGLDTS. Residues tyrosine 91 and serine 96 each contribute to the L-citrulline site. Glycine 121 contributes to the ATP binding site. L-aspartate-binding residues include threonine 123, asparagine 127, and aspartate 128. L-citrulline is bound at residue asparagine 127. The L-citrulline site is built by arginine 131, serine 181, serine 190, glutamate 266, and tyrosine 278.

Belongs to the argininosuccinate synthase family. Type 1 subfamily. Homotetramer.

Its subcellular location is the cytoplasm. It carries out the reaction L-citrulline + L-aspartate + ATP = 2-(N(omega)-L-arginino)succinate + AMP + diphosphate + H(+). The protein operates within amino-acid biosynthesis; L-arginine biosynthesis; L-arginine from L-ornithine and carbamoyl phosphate: step 2/3. The chain is Argininosuccinate synthase from Campylobacter concisus (strain 13826).